A 369-amino-acid polypeptide reads, in one-letter code: Bi-functional coumaroyl CoA and feruloyl CoA ortho-hydroxylase Diox2 (369 aa).

In terms of domain architecture, Fe2OG dioxygenase spans 215 to 318 (GSRRVNLNYY…RISVPLFVNP (104 aa)). Tyrosine 224 lines the 2-oxoglutarate pocket. Residues histidine 239, aspartate 241, and histidine 299 each coordinate Fe cation. Arginine 309 and serine 311 together coordinate 2-oxoglutarate.

It belongs to the iron/ascorbate-dependent oxidoreductase family. L-ascorbate serves as cofactor. Fe(2+) is required as a cofactor.

It carries out the reaction (E)-4-coumaroyl-CoA + 2-oxoglutarate + O2 = (E)-2,4-dihydroxycinnamoyl-CoA + succinate + CO2. It catalyses the reaction (E)-feruloyl-CoA + 2-oxoglutarate + O2 = (E)-6-hydroxyferuloyl-CoA + succinate + CO2. It participates in phenylpropanoid metabolism. Its function is as follows. 2-oxoglutarate (OG)- and Fe(II)-dependent dioxygenase (2OGD) involved in scopoletin and umbelliferone biosynthesis. Converts feruloyl CoA into 6'-hydroxyferuloyl CoA, and p-coumaroyl CoA into 2,4-dihydroxycinnamoyl-CoA. The sequence is that of Bi-functional coumaroyl CoA and feruloyl CoA ortho-hydroxylase Diox2 from Ruta graveolens (Common rue).